We begin with the raw amino-acid sequence, 423 residues long: UPF0229 protein PFLU_5583 (423 aa).

Positions 64–109 are disordered; the sequence is LHHGRGGKQTVVHPGNKEFTTGEHIQRPQGGGGGKGPGKAGNSGEG. Over residues 92–107 the composition is skewed to gly residues; that stretch reads QGGGGGKGPGKAGNSG.

This sequence belongs to the UPF0229 family.

In Pseudomonas fluorescens (strain SBW25), this protein is UPF0229 protein PFLU_5583.